The sequence spans 476 residues: Eukaryotic translation initiation factor 3 subunit L (476 aa).

In terms of domain architecture, PCI spans 257-452; that stretch reads DAIRMFSHIL…DLDYALENDL (196 aa).

It belongs to the eIF-3 subunit L family. As to quaternary structure, component of the eukaryotic translation initiation factor 3 (eIF-3) complex.

Its subcellular location is the cytoplasm. Its function is as follows. Component of the eukaryotic translation initiation factor 3 (eIF-3) complex, which is involved in protein synthesis of a specialized repertoire of mRNAs and, together with other initiation factors, stimulates binding of mRNA and methionyl-tRNAi to the 40S ribosome. The eIF-3 complex specifically targets and initiates translation of a subset of mRNAs involved in cell proliferation. The sequence is that of Eukaryotic translation initiation factor 3 subunit L from Neosartorya fischeri (strain ATCC 1020 / DSM 3700 / CBS 544.65 / FGSC A1164 / JCM 1740 / NRRL 181 / WB 181) (Aspergillus fischerianus).